The primary structure comprises 259 residues: Thiazole synthase (259 aa).

The Schiff-base intermediate with DXP role is filled by Lys95. 1-deoxy-D-xylulose 5-phosphate is bound by residues Gly156, 182–183 (AG), and 204–205 (AS).

It belongs to the ThiG family. Homotetramer. Forms heterodimers with either ThiH or ThiS.

It is found in the cytoplasm. The catalysed reaction is [ThiS sulfur-carrier protein]-C-terminal-Gly-aminoethanethioate + 2-iminoacetate + 1-deoxy-D-xylulose 5-phosphate = [ThiS sulfur-carrier protein]-C-terminal Gly-Gly + 2-[(2R,5Z)-2-carboxy-4-methylthiazol-5(2H)-ylidene]ethyl phosphate + 2 H2O + H(+). Its pathway is cofactor biosynthesis; thiamine diphosphate biosynthesis. Catalyzes the rearrangement of 1-deoxy-D-xylulose 5-phosphate (DXP) to produce the thiazole phosphate moiety of thiamine. Sulfur is provided by the thiocarboxylate moiety of the carrier protein ThiS. In vitro, sulfur can be provided by H(2)S. The protein is Thiazole synthase of Corynebacterium aurimucosum (strain ATCC 700975 / DSM 44827 / CIP 107346 / CN-1) (Corynebacterium nigricans).